Here is a 194-residue protein sequence, read N- to C-terminus: E3 ubiquitin-protein ligase RNF4 (194 aa).

The segment covering 1 to 12 (MSTRNPQRKRRG) has biased composition (basic residues). A required for ubiquitination activity region spans residues 1–20 (MSTRNPQRKRRGGAVNSRQT). The tract at residues 1-36 (MSTRNPQRKRRGGAVNSRQTQKRTRETTSTPEISLE) is disordered. The mediates interaction with TRPS1 stretch occupies residues 6–65 (PQRKRRGGAVNSRQTQKRTRETTSTPEISLEAEPIELVETVGDEIVDLTCESLEPVVVDL). 4 short sequence motifs (SUMO interaction motif) span residues 40-43 (IELV), 50-53 (IVDL), 61-63 (VVV), and 71-74 (VVIV). 2 positions are modified to phosphoserine: Ser-98 and Ser-99. Cys-136, Cys-139, Cys-158, His-160, Cys-163, Cys-166, Cys-177, and Cys-180 together coordinate Zn(2+). The RING-type zinc finger occupies 136–181 (CPICMDGYSEIVQNGRLIVSTECGHVFCSQCLRDSLKNANTCPTCR).

In terms of assembly, homodimer (via RING-type zinc finger domain). Interacts with GSC2. Interacts with AR/the androgen receptor and TBP. Interacts with TCF20. Interacts with PATZ1. Interacts with TRPS1; negatively regulates TRPS1 transcriptional repressor activity. Interacts with PML (isoform PML-1, isoform PML-2, isoform PML-3, isoform PML-4, isoform PML-5 and isoform PML-6). Interacts with PRDM1/Blimp-1. In terms of processing, sumoylated; conjugated by one or two SUMO1 moieties. Post-translationally, autoubiquitinated. As to expression, widely expressed with highest levels in testis.

Its subcellular location is the cytoplasm. It is found in the nucleus. The protein localises to the nucleoplasm. It localises to the PML body. The catalysed reaction is S-ubiquitinyl-[E2 ubiquitin-conjugating enzyme]-L-cysteine + [acceptor protein]-L-lysine = [E2 ubiquitin-conjugating enzyme]-L-cysteine + N(6)-ubiquitinyl-[acceptor protein]-L-lysine.. Its pathway is protein modification; protein ubiquitination. In terms of biological role, E3 ubiquitin-protein ligase which binds polysumoylated chains covalently attached to proteins and mediates 'Lys-6'-, 'Lys-11'-, 'Lys-48'- and 'Lys-63'-linked polyubiquitination of those substrates and their subsequent targeting to the proteasome for degradation. Regulates the degradation of several proteins including PML and the transcriptional activator PEA3. Involved in chromosome alignment and spindle assembly, it regulates the kinetochore CENPH-CENPI-CENPK complex by targeting polysumoylated CENPI to proteasomal degradation. Regulates the cellular responses to hypoxia and heat shock through degradation of respectively EPAS1 and PARP1. Alternatively, it may also bind DNA/nucleosomes and have a more direct role in the regulation of transcription for instance enhancing basal transcription and steroid receptor-mediated transcriptional activation. Catalyzes ubiquitination of sumoylated PARP1 in response to PARP1 trapping to chromatin, leading to PARP1 removal from chromatin by VCP/p97. This chain is E3 ubiquitin-protein ligase RNF4, found in Rattus norvegicus (Rat).